Reading from the N-terminus, the 179-residue chain is Ribosome maturation factor RimM (179 aa).

Residues 97-170 (DGELSWNFFV…LITVELPEGL (74 aa)) form the PRC barrel domain.

Belongs to the RimM family. Binds ribosomal protein uS19.

It localises to the cytoplasm. Functionally, an accessory protein needed during the final step in the assembly of 30S ribosomal subunit, possibly for assembly of the head region. Essential for efficient processing of 16S rRNA. May be needed both before and after RbfA during the maturation of 16S rRNA. It has affinity for free ribosomal 30S subunits but not for 70S ribosomes. The protein is Ribosome maturation factor RimM of Bacteroides thetaiotaomicron (strain ATCC 29148 / DSM 2079 / JCM 5827 / CCUG 10774 / NCTC 10582 / VPI-5482 / E50).